A 157-amino-acid chain; its full sequence is 2-C-methyl-D-erythritol 2,4-cyclodiphosphate synthase (157 aa).

A divalent metal cation-binding residues include D8 and H10. 4-CDP-2-C-methyl-D-erythritol 2-phosphate is bound by residues D8–H10 and H35–S36. H43 contributes to the a divalent metal cation binding site. 4-CDP-2-C-methyl-D-erythritol 2-phosphate contacts are provided by residues D57–G59, F62–D66, and K142.

It belongs to the IspF family. Homotrimer. It depends on a divalent metal cation as a cofactor.

The catalysed reaction is 4-CDP-2-C-methyl-D-erythritol 2-phosphate = 2-C-methyl-D-erythritol 2,4-cyclic diphosphate + CMP. It functions in the pathway isoprenoid biosynthesis; isopentenyl diphosphate biosynthesis via DXP pathway; isopentenyl diphosphate from 1-deoxy-D-xylulose 5-phosphate: step 4/6. Functionally, involved in the biosynthesis of isopentenyl diphosphate (IPP) and dimethylallyl diphosphate (DMAPP), two major building blocks of isoprenoid compounds. Catalyzes the conversion of 4-diphosphocytidyl-2-C-methyl-D-erythritol 2-phosphate (CDP-ME2P) to 2-C-methyl-D-erythritol 2,4-cyclodiphosphate (ME-CPP) with a corresponding release of cytidine 5-monophosphate (CMP). This is 2-C-methyl-D-erythritol 2,4-cyclodiphosphate synthase from Wigglesworthia glossinidia brevipalpis.